Here is a 232-residue protein sequence, read N- to C-terminus: MGQKVHPNGIRLGIVKPWNSTWYANTKEFADNLDSDFKVRQFLIKELAKASVSRIVIERPAKSIRVTIHTARPGIVIGKKGEDVEKLRKVVANIAGVPAQINIAEVRKPELDAKLVADSITSQLERRVMFRRAMKRAVQNAMRLGAKGIKVEVSGRLGGAEIARTEWYREGRVPLHTLRADIDYNTSEAHTTYGVIGVKVWIFKGEILGGMAAVEQPEPAAQPKKQQRKGRK.

The 69-residue stretch at 39–107 (VRQFLIKELA…PAQINIAEVR (69 aa)) folds into the KH type-2 domain.

The protein belongs to the universal ribosomal protein uS3 family. As to quaternary structure, part of the 30S ribosomal subunit. Forms a tight complex with proteins S10 and S14.

Its function is as follows. Binds the lower part of the 30S subunit head. Binds mRNA in the 70S ribosome, positioning it for translation. In Serratia proteamaculans (strain 568), this protein is Small ribosomal subunit protein uS3.